We begin with the raw amino-acid sequence, 703 residues long: Elongation factor G 1 (703 aa).

The tr-type G domain occupies 8-291 (ERYRNIGISA…AVIDYLPSPV (284 aa)). Residues 17 to 24 (AHIDAGKT), 88 to 92 (DTPGH), and 142 to 145 (NKMD) contribute to the GTP site.

It belongs to the TRAFAC class translation factor GTPase superfamily. Classic translation factor GTPase family. EF-G/EF-2 subfamily.

The protein localises to the cytoplasm. Catalyzes the GTP-dependent ribosomal translocation step during translation elongation. During this step, the ribosome changes from the pre-translocational (PRE) to the post-translocational (POST) state as the newly formed A-site-bound peptidyl-tRNA and P-site-bound deacylated tRNA move to the P and E sites, respectively. Catalyzes the coordinated movement of the two tRNA molecules, the mRNA and conformational changes in the ribosome. The polypeptide is Elongation factor G 1 (Burkholderia orbicola (strain AU 1054)).